The chain runs to 323 residues: Cuticle collagen 39 (323 aa).

The signal sequence occupies residues 1–28 (MTGPTCLAVVAGISGVFVFGALFSVAQI). Polar residues predominate over residues 80–89 (QCNCGPQASN). Residues 80-293 (QCNCGPQASN…GAAEQGYRHR (214 aa)) are disordered. Triple-helical region regions lie at residues 93–125 (GPPGPPGAPGDRGLDGQPGGAGNPGQPGVAGPK), 138–200 (GSPG…GGQR), and 203–265 (GLPG…PGAD). The segment covering 108-117 (GQPGGAGNPG) has biased composition (gly residues). Residues 136 to 146 (PAGSPGPAGAP) show a composition bias toward low complexity. Positions 159–168 (GHPGQGGSQG) are enriched in gly residues. The span at 169 to 191 (PAGPRGPAGDAGAPGQVGAPGNP) shows a compositional bias: low complexity. A compositionally biased stretch (gly residues) spans 224 to 233 (GQSGGQGQQG). Over residues 234–267 (PAGPAGPDGQPGQPGQDGQAGAPGNDGAPGADAA) the composition is skewed to low complexity.

The protein belongs to the cuticular collagen family. As to quaternary structure, collagen polypeptide chains are complexed within the cuticle by disulfide bonds and other types of covalent cross-links.

Nematode cuticles are composed largely of collagen-like proteins. The cuticle functions both as an exoskeleton and as a barrier to protect the worm from its environment. The protein is Cuticle collagen 39 (col-39) of Caenorhabditis elegans.